The sequence spans 545 residues: MPASFSIAGRLVDLHARAIRPATVHVQDGVIARIEPAETVPERHLLPGFIDAHVHVESAMLPPSEFARAAVRHGTVGTVSDPHEIANVLGVEGVEYMIADGRPVPFHFAFGAPSCVPATPFETSGAELGPDAVSALLDRDDVPYLSEMMDYPGAIDGAPNVLAKIRAAQVRDKPVDGHAPGLRGDDVAQYAAAGIETDHECVSIEEAREKLEAGMKIAIREGSAAKNFDELIPLMDEAPDRLMFCSDDRHPDALAEGHIDTLVRRALNRGYDRFDVLRAACVHPVEHYGLDVGLLREGDPADFIVVDDLDALNVQETYVEGALVAEEGETHIEHVASDVVNRFDAEPVAPADFRVPAGGDRLRVITAVDNQLGTGEEVVTTPTDDGYAVADPDRDVLKLAVVNRYTEESTPAVAFVRGFGLDGGALASSVAHDSHNVVAVGARDDALARAVNAVVRAEGGISAAAEGTQVLPLPIAGLMSDEPYDVVARRYTRLTDYVRAELGSAMDAPFMTLSFLSLLVIPQLKLSDRGLFDGAAFEFVDRFVD.

Belongs to the metallo-dependent hydrolases superfamily. Adenine deaminase family. The cofactor is Mn(2+).

It carries out the reaction adenine + H2O + H(+) = hypoxanthine + NH4(+). The protein is Adenine deaminase of Salinibacter ruber (strain DSM 13855 / M31).